Reading from the N-terminus, the 195-residue chain is ATP-dependent Clp protease proteolytic subunit 2 (195 aa).

The active-site Nucleophile is serine 98. The active site involves histidine 123.

The protein belongs to the peptidase S14 family. As to quaternary structure, fourteen ClpP subunits assemble into 2 heptameric rings which stack back to back to give a disk-like structure with a central cavity, resembling the structure of eukaryotic proteasomes.

Its subcellular location is the cytoplasm. It carries out the reaction Hydrolysis of proteins to small peptides in the presence of ATP and magnesium. alpha-casein is the usual test substrate. In the absence of ATP, only oligopeptides shorter than five residues are hydrolyzed (such as succinyl-Leu-Tyr-|-NHMec, and Leu-Tyr-Leu-|-Tyr-Trp, in which cleavage of the -Tyr-|-Leu- and -Tyr-|-Trp bonds also occurs).. Functionally, cleaves peptides in various proteins in a process that requires ATP hydrolysis. Has a chymotrypsin-like activity. Plays a major role in the degradation of misfolded proteins. This Rhodopirellula baltica (strain DSM 10527 / NCIMB 13988 / SH1) protein is ATP-dependent Clp protease proteolytic subunit 2.